Consider the following 464-residue polypeptide: Properdin (464 aa).

Positions 1-22 (MPAEMQAPQWLLLLLVILPATG) are cleaved as a signal peptide. TSP type-1 domains follow at residues 24 to 72 (DPVL…QACR), 73 to 130 (SPQW…PCCP), 132 to 187 (MGGW…KTCP), 189 to 251 (HGAW…PPCP), 253 to 309 (AGGW…VPCP), 311 to 372 (NGEW…HNCI), and 374 to 457 (KGSW…PVCK). 3 disulfides stabilise this stretch: cysteine 28–cysteine 52, cysteine 39–cysteine 68, and cysteine 53–cysteine 71. C-linked (Man) tryptophan glycosylation is found at tryptophan 79 and tryptophan 82. Cystine bridges form between cysteine 85–cysteine 123, cysteine 89–cysteine 129, cysteine 100–cysteine 107, cysteine 128–cysteine 166, cysteine 144–cysteine 180, cysteine 148–cysteine 186, and cysteine 159–cysteine 170. Tryptophan 135, tryptophan 138, and tryptophan 141 each carry a C-linked (Man) tryptophan glycan. An O-linked (Fuc...) threonine glycan is attached at threonine 147. 3 C-linked (Man) tryptophan glycosylation sites follow: tryptophan 192, tryptophan 195, and tryptophan 198. Intrachain disulfides connect cysteine 201-cysteine 244, cysteine 205-cysteine 250, and cysteine 220-cysteine 234. An O-linked (Fuc...) serine glycan is attached at serine 204. C-linked (Man) tryptophan glycans are attached at residues tryptophan 256 and tryptophan 259. 3 disulfides stabilise this stretch: cysteine 265/cysteine 302, cysteine 269/cysteine 308, and cysteine 280/cysteine 292. Threonine 268 is a glycosylation site (O-linked (Fuc...) threonine). C-linked (Man) tryptophan glycans are attached at residues tryptophan 317 and tryptophan 320. 3 disulfide bridges follow: cysteine 323–cysteine 365, cysteine 332–cysteine 371, and cysteine 345–cysteine 355. An interaction with Complement C3 beta chain region spans residues 346 to 354 (GGRKFNGKP). Tryptophan 377, tryptophan 380, and tryptophan 383 each carry a C-linked (Man) tryptophan glycan. Intrachain disulfides connect cysteine 386–cysteine 450, cysteine 390–cysteine 456, and cysteine 402–cysteine 434. N-linked (GlcNAc...) asparagine glycosylation is present at asparagine 423.

As to quaternary structure, in plasma, properdin exists as dimers, trimers or tetramers in the relative proportions of 26:54:20. Interacts with the pro-C3-convertase enzyme complex (C3b-Bb) comprised of Complement C3 beta chain (C3b) and the Complement factor B Bb fragment (Bb), where it binds (via its TSP type-1 5 domain) with C3b and Bb. This interaction stabilizes the complex and allows it to become the active C3-convertase enzyme complex (C3b-Bb-FP). Interacts with C3b. Interacts with CFB.

It is found in the secreted. A positive regulator of the alternate pathway of complement. It binds to and stabilizes the C3- and C5-convertase enzyme complexes. Inhibits CFI-CFH mediated degradation of Inhibits CFI-CFH mediated degradation of Complement C3 beta chain (C3b). In Mus musculus (Mouse), this protein is Properdin (Cfp).